Here is a 184-residue protein sequence, read N- to C-terminus: Female-specific protein transformer (184 aa).

Composition is skewed to basic and acidic residues over residues Met-1–Lys-39 and Asp-49–Arg-58. Disordered regions lie at residues Met-1–Ile-123 and Tyr-146–Tyr-184. 2 stretches are compositionally biased toward basic residues: residues Ser-59–Ser-75 and Ser-84–His-114. The segment covering Pro-150–Pro-159 has biased composition (pro residues).

Its subcellular location is the nucleus speckle. Member of the regulatory pathway controlling female somatic sexual differentiation, regulated by Sxl. Activates dsx female-specific splicing by promoting the formation of a splicing enhancer complex which consists of tra, tra2 and sr proteins. The polypeptide is Female-specific protein transformer (tra) (Drosophila simulans (Fruit fly)).